The sequence spans 340 residues: MLTKRQVKILQTIVEEFIKTNQPVGSKRILELLDIKISSATIRNESAILEHEGYLEKQHTSSGRTPSTKGYRYYVDNIMKLDSADYTRLKIYLNQLLDLRKYDIDKTINYASEIISELTKMTAVVIKKQNIKNIKLKKIELILLSEFLASVLFIFSDGDVQNKMFNLKDISLSDLKIAIKLFSDFLVDVKLDEIDQYLNDLKHQLSLSIKQYDYVLNTFINTILESKNEQKETHGMRYMLENPEFNDTNKLKNAVKLVEQLSPFDWFNIAYESNKNMNKIAIKIGNEIDQINDDISMIATELKIGNSSTVLTLVGPKRVDYNQVNQLMNLIIEIINAKEN.

Belongs to the HrcA family.

Functionally, negative regulator of class I heat shock genes (grpE-dnaK-dnaJ and groELS operons). Prevents heat-shock induction of these operons. This chain is Heat-inducible transcription repressor HrcA, found in Mycoplasma capricolum subsp. capricolum (strain California kid / ATCC 27343 / NCTC 10154).